Consider the following 600-residue polypeptide: MATQLIENKLKLLPEKPGCYLMKDINGTVIYVGKSKNLKNRVRSYFKSKQVGRRAELVREIRDYDIITVSTDKEAFLLEITLIKKYQPYYNVQLKQGTGYPYIEITREHDPQTRLTSIVCKDGGYYFGPYPNVYAAQATLKFIQKVFPLRRCHGYQGRPCLYYHMGQCLGACFKKVPQKEYDEQIKKIKRFLNGDIGAVKQDLTQKMEQASEQLEFERAAEIRDQLKYIEETVEKQKIISNDNTQRDIFNYYVDKSWISIQIFFLRQAKLLRRETRMFPLTDITDPEDAFTSFIVQFYGQKNRVLPKEVLIPAGFDNDTLAEVLTVPVRTPQRGQKKSLLDMAKDNAKLKLDDKFRLLELGNRKTKGAQKEIFDALGLPYGHIIESFDHSHIQGADPVSALVVFKDGEPDKTAYRKYKLKGEVEHQNGGDEVRNTREVVRRRYGRLLREHKKMPDLILMDGGQIQVDACEDVLRNELNLNIPVAGMVKDDKHRTNHLLFGDPINGVPLKLIPLNPKSEGFYLMTRIQDEVHRFAITFHRRRHAKNALSSRLDSIKGIGPKSRNKLLRKFGSLKKIKEASVDDLRAAGLTLPQAQTVKLML.

The region spanning 15–92 (EKPGCYLMKD…IKKYQPYYNV (78 aa)) is the GIY-YIG domain. One can recognise a UVR domain in the interval 197–232 (GAVKQDLTQKMEQASEQLEFERAAEIRDQLKYIEET).

Belongs to the UvrC family. As to quaternary structure, interacts with UvrB in an incision complex.

The protein resides in the cytoplasm. Its function is as follows. The UvrABC repair system catalyzes the recognition and processing of DNA lesions. UvrC both incises the 5' and 3' sides of the lesion. The N-terminal half is responsible for the 3' incision and the C-terminal half is responsible for the 5' incision. This chain is UvrABC system protein C, found in Lactobacillus helveticus (strain DPC 4571).